A 225-amino-acid chain; its full sequence is Membrane protein (225 aa).

The Virion surface segment spans residues methionine 1–glutamate 20. The helical transmembrane segment at tyrosine 21 to alanine 41 threads the bilayer. The Intravirion segment spans residues threonine 42 to lysine 51. Residues methionine 52–tyrosine 72 form a helical membrane-spanning segment. Residues proline 73–glycine 77 lie on the Virion surface side of the membrane. Residues glycine 78–isoleucine 98 traverse the membrane as a helical segment. At glutamine 99–threonine 225 the chain is on the intravirion side.

This sequence belongs to the gammacoronaviruses M protein family. In terms of assembly, homomultimer. Interacts with envelope E protein in the budding compartment of the host cell, which is located between endoplasmic reticulum and the Golgi complex. Forms a complex with HE and S proteins. Interacts with nucleocapsid N protein. This interaction probably participates in RNA packaging into the virus.

It is found in the virion membrane. It localises to the host Golgi apparatus membrane. In terms of biological role, component of the viral envelope that plays a central role in virus morphogenesis and assembly via its interactions with other viral proteins. In Gallus gallus (Chicken), this protein is Membrane protein.